Here is a 292-residue protein sequence, read N- to C-terminus: Undecaprenyl-diphosphatase 2 (292 aa).

The next 5 helical transmembrane spans lie at 89 to 109 (WLVI…QDAI), 118 to 138 (LIAT…WYAS), 203 to 223 (FLLA…SIGG), 232 to 252 (PTIL…AWFL), and 263 to 283 (FVLY…GGAL).

This sequence belongs to the UppP family.

It localises to the cell membrane. It carries out the reaction di-trans,octa-cis-undecaprenyl diphosphate + H2O = di-trans,octa-cis-undecaprenyl phosphate + phosphate + H(+). Its function is as follows. Catalyzes the dephosphorylation of undecaprenyl diphosphate (UPP). Confers resistance to bacitracin. The polypeptide is Undecaprenyl-diphosphatase 2 (Frankia casuarinae (strain DSM 45818 / CECT 9043 / HFP020203 / CcI3)).